The chain runs to 396 residues: ATP phosphoribosyltransferase regulatory subunit (396 aa).

The protein belongs to the class-II aminoacyl-tRNA synthetase family. HisZ subfamily. In terms of assembly, heteromultimer composed of HisG and HisZ subunits.

It is found in the cytoplasm. It functions in the pathway amino-acid biosynthesis; L-histidine biosynthesis; L-histidine from 5-phospho-alpha-D-ribose 1-diphosphate: step 1/9. Required for the first step of histidine biosynthesis. May allow the feedback regulation of ATP phosphoribosyltransferase activity by histidine. This Cellvibrio japonicus (strain Ueda107) (Pseudomonas fluorescens subsp. cellulosa) protein is ATP phosphoribosyltransferase regulatory subunit.